Here is a 387-residue protein sequence, read N- to C-terminus: Proteinase R (387 aa).

A signal peptide spans 1–21 (MRLSILLGLLPLAPRPPAVDA). The propeptide occupies 22 to 108 (VEQRSEPAPL…IEQDAIVNIN (87 aa)). One can recognise an Inhibitor I9 domain in the interval 42 to 107 (KYIVKLKEGS…YIEQDAIVNI (66 aa)). Residues 115–387 (PWGLARISST…NLLAYNNYQG (273 aa)) form the Peptidase S8 domain. T124 lines the Ca(2+) pocket. 2 disulfides stabilise this stretch: C142–C231 and C286–C357. Residues D147 and H177 each act as charge relay system in the active site. Position 308 (D308) interacts with Ca(2+). Residue S332 is the Charge relay system of the active site. Position 368 (D368) interacts with Ca(2+).

Belongs to the peptidase S8 family. Requires Ca(2+) as cofactor.

Its function is as follows. Serine proteinase. The protein is Proteinase R (PROR) of Parengyodontium album (Tritirachium album).